We begin with the raw amino-acid sequence, 821 residues long: Probable phosphoenolpyruvate synthase (821 aa).

H444 functions as the Tele-phosphohistidine intermediate in the catalytic mechanism. Residues R543, R590, E687, G709, T710, N711, and D712 each contribute to the substrate site. E687 contacts Mg(2+). A Mg(2+)-binding site is contributed by D712. The active-site Proton donor is the C759.

It belongs to the PEP-utilizing enzyme family. It depends on Mg(2+) as a cofactor.

The catalysed reaction is pyruvate + ATP + H2O = phosphoenolpyruvate + AMP + phosphate + 2 H(+). It participates in carbohydrate biosynthesis; gluconeogenesis. In terms of biological role, catalyzes the phosphorylation of pyruvate to phosphoenolpyruvate. The sequence is that of Probable phosphoenolpyruvate synthase (ppsA) from Pyrococcus horikoshii (strain ATCC 700860 / DSM 12428 / JCM 9974 / NBRC 100139 / OT-3).